An 84-amino-acid polypeptide reads, in one-letter code: uncharacterized protein (84 aa).

A helical transmembrane segment spans residues 25–45 (ILMTVAGFIIAFAILVFQISF).

The protein resides in the membrane. This is an uncharacterized protein from Bacillus anthracis.